Here is a 237-residue protein sequence, read N- to C-terminus: Corrinoid adenosyltransferase MMAB (237 aa).

The transit peptide at 1–26 (MAVWLFGGRLGLRGRLSACRLLCPRF) directs the protein to the mitochondrion. The segment at 30 to 49 (GPQGGEDGDRLQPSSTAAKI) is disordered. ATP is bound by residues 54 to 57 (TKTG), 62 to 63 (SS), and Lys72. Ser128 is subject to Phosphoserine. 184 to 188 (RRAER) provides a ligand contact to ATP. Lys205 bears the N6-succinyllysine mark. Asn208 contacts ATP. Lys224 is modified (N6-acetyllysine; alternate). Lys224 bears the N6-succinyllysine; alternate mark.

Belongs to the Cob(I)alamin adenosyltransferase family. Homotrimer.

Its subcellular location is the mitochondrion. It carries out the reaction cob(I)alamin-[corrinoid adenosyltransferase] + ATP = apo-[corrinoid adenosyltransferase] + adenosylcob(III)alamin + triphosphate. Converts cob(I)alamin to adenosylcobalamin (adenosylcob(III)alamin), a coenzyme for methylmalonyl-CoA mutase, therefore participates in the final step of the vitamin B12 conversion. Generates adenosylcobalamin (AdoCbl) and directly delivers the cofactor to MUT in a transfer that is stimulated by ATP-binding to MMAB and gated by MMAA. The chain is Corrinoid adenosyltransferase MMAB from Mus musculus (Mouse).